Reading from the N-terminus, the 498-residue chain is NADP-dependent glyceraldehyde-3-phosphate dehydrogenase (498 aa).

Residues Arg-118 and 171-172 (NY) each bind substrate. Residues Lys-194, Thr-197, and Asp-232 each contribute to the NADP(+) site. 247-251 (GGDTG) is an NAD(+) binding site. Residue Glu-266 is the Proton acceptor of the active site. Residue 299–301 (RCT) participates in substrate binding. The Nucleophile role is filled by Cys-300. Residue Glu-393 participates in NADP(+) binding. Arg-453 is a substrate binding site.

The protein belongs to the aldehyde dehydrogenase family.

It is found in the cytoplasm. The catalysed reaction is D-glyceraldehyde 3-phosphate + NADP(+) + H2O = (2R)-3-phosphoglycerate + NADPH + 2 H(+). Important as a means of generating NADPH for biosynthetic reactions. The protein is NADP-dependent glyceraldehyde-3-phosphate dehydrogenase (GPN1) of Zea mays (Maize).